Here is a 436-residue protein sequence, read N- to C-terminus: Peptidase B (436 aa).

Positions 201 and 206 each coordinate Mn(2+). Lysine 213 is an active-site residue. 3 residues coordinate Mn(2+): aspartate 224, aspartate 283, and glutamate 285. Residue arginine 287 is part of the active site.

It belongs to the peptidase M17 family. Homohexamer. It depends on Mn(2+) as a cofactor.

Its subcellular location is the cytoplasm. The catalysed reaction is Release of an N-terminal amino acid, Xaa, from a peptide or arylamide. Xaa is preferably Glu or Asp but may be other amino acids, including Leu, Met, His, Cys and Gln.. Its function is as follows. Probably plays an important role in intracellular peptide degradation. This Pectobacterium carotovorum subsp. carotovorum (strain PC1) protein is Peptidase B.